The chain runs to 241 residues: Glucosamine-6-phosphate deaminase (241 aa).

Catalysis depends on Asp-67, which acts as the Proton acceptor; for enolization step. The For ring-opening step role is filled by Asn-136. Catalysis depends on His-138, which acts as the Proton acceptor; for ring-opening step. Residue Glu-143 is the For ring-opening step of the active site.

This sequence belongs to the glucosamine/galactosamine-6-phosphate isomerase family. NagB subfamily.

The catalysed reaction is alpha-D-glucosamine 6-phosphate + H2O = beta-D-fructose 6-phosphate + NH4(+). The protein operates within amino-sugar metabolism; N-acetylneuraminate degradation; D-fructose 6-phosphate from N-acetylneuraminate: step 5/5. In terms of biological role, catalyzes the reversible isomerization-deamination of glucosamine 6-phosphate (GlcN6P) to form fructose 6-phosphate (Fru6P) and ammonium ion. This is Glucosamine-6-phosphate deaminase from Clostridium novyi (strain NT).